The primary structure comprises 372 residues: Cobalt-precorrin-5B C(1)-methyltransferase (372 aa).

This sequence belongs to the CbiD family.

It carries out the reaction Co-precorrin-5B + S-adenosyl-L-methionine = Co-precorrin-6A + S-adenosyl-L-homocysteine. It functions in the pathway cofactor biosynthesis; adenosylcobalamin biosynthesis; cob(II)yrinate a,c-diamide from sirohydrochlorin (anaerobic route): step 6/10. Catalyzes the methylation of C-1 in cobalt-precorrin-5B to form cobalt-precorrin-6A. The protein is Cobalt-precorrin-5B C(1)-methyltransferase of Geobacillus kaustophilus (strain HTA426).